Consider the following 179-residue polypeptide: Small ribosomal subunit protein uS5 (179 aa).

The S5 DRBM domain occupies Leu-13–Val-76. The segment at Asp-160–Ala-179 is disordered.

This sequence belongs to the universal ribosomal protein uS5 family. Part of the 30S ribosomal subunit. Contacts proteins S4 and S8.

In terms of biological role, with S4 and S12 plays an important role in translational accuracy. Located at the back of the 30S subunit body where it stabilizes the conformation of the head with respect to the body. This is Small ribosomal subunit protein uS5 from Chloroflexus aggregans (strain MD-66 / DSM 9485).